The following is a 480-amino-acid chain: Methylenetetrahydrofolate--tRNA-(uracil-5-)-methyltransferase TrmFO (480 aa).

15 to 20 (GGGLAG) provides a ligand contact to FAD.

It belongs to the MnmG family. TrmFO subfamily. FAD is required as a cofactor.

Its subcellular location is the cytoplasm. It carries out the reaction uridine(54) in tRNA + (6R)-5,10-methylene-5,6,7,8-tetrahydrofolate + NADH + H(+) = 5-methyluridine(54) in tRNA + (6S)-5,6,7,8-tetrahydrofolate + NAD(+). The catalysed reaction is uridine(54) in tRNA + (6R)-5,10-methylene-5,6,7,8-tetrahydrofolate + NADPH + H(+) = 5-methyluridine(54) in tRNA + (6S)-5,6,7,8-tetrahydrofolate + NADP(+). In terms of biological role, catalyzes the folate-dependent formation of 5-methyl-uridine at position 54 (M-5-U54) in all tRNAs. This is Methylenetetrahydrofolate--tRNA-(uracil-5-)-methyltransferase TrmFO from Caulobacter sp. (strain K31).